The primary structure comprises 165 residues: Protein NKG7 (165 aa).

Transmembrane regions (helical) follow at residues 9–29, 61–81, 92–112, and 133–153; these read LFAGSLGLTSSLIALTTDFWI, FCILAVLWGLVSVSFLILSCI, LVSTVMAFSAALSILVAMAVY, and FYLGWVSFILFLFAGCLSLGA.

The protein belongs to the PMP-22/EMP/MP20 family. In terms of tissue distribution, predominantly expressed by leukocytes with cytotoxic activity such as CD8(+) T-cells and natural killer cells.

It is found in the cell membrane. The protein localises to the cytolytic granule membrane. Regulates cytotoxic granule exocytosis in effector lymphocytes, thus acting as a critical mediator of inflammation in a broad range of infectious and non-infectious diseases. Essential for cytotoxic degranulation of natural killer (NK) cells and CD8(+) T-cells and for the activation of CD4(+) T-cells following infection. Plays a critical role in CD8(+) T-cell and NK cell-mediated cytolysis of target cells and contributes to the cytolytic activity via the perforin/granzyme pathway by enhancing exocytosis of LAMP1-carrying lytic granules. Contributes to NK cell-mediated control of cancer metastasis. The chain is Protein NKG7 (Nkg7) from Mus musculus (Mouse).